An 805-amino-acid chain; its full sequence is DNA gyrase subunit B (805 aa).

The Toprim domain maps to 435–550; that stretch reads SEIFIVEGDS…RGYIYIAQPP (116 aa). Residues Glu-441, Asp-515, and Asp-517 each coordinate Mg(2+).

The protein belongs to the type II topoisomerase GyrB family. Heterotetramer, composed of two GyrA and two GyrB chains. In the heterotetramer, GyrA contains the active site tyrosine that forms a transient covalent intermediate with DNA, while GyrB binds cofactors and catalyzes ATP hydrolysis. The cofactor is Mg(2+). It depends on Mn(2+) as a cofactor. Requires Ca(2+) as cofactor.

It localises to the cytoplasm. The enzyme catalyses ATP-dependent breakage, passage and rejoining of double-stranded DNA.. Its function is as follows. A type II topoisomerase that negatively supercoils closed circular double-stranded (ds) DNA in an ATP-dependent manner to modulate DNA topology and maintain chromosomes in an underwound state. Negative supercoiling favors strand separation, and DNA replication, transcription, recombination and repair, all of which involve strand separation. Also able to catalyze the interconversion of other topological isomers of dsDNA rings, including catenanes and knotted rings. Type II topoisomerases break and join 2 DNA strands simultaneously in an ATP-dependent manner. This Caulobacter vibrioides (strain ATCC 19089 / CIP 103742 / CB 15) (Caulobacter crescentus) protein is DNA gyrase subunit B.